Reading from the N-terminus, the 202-residue chain is Small ribosomal subunit protein uS5 (202 aa).

The 64-residue stretch at 46-109 (LKSEVLSVGF…RRAKLNIVPV (64 aa)) folds into the S5 DRBM domain.

It belongs to the universal ribosomal protein uS5 family. As to quaternary structure, part of the 30S ribosomal subunit. Contacts protein S4.

With S4 and S12 plays an important role in translational accuracy. This is Small ribosomal subunit protein uS5 from Thermofilum pendens (strain DSM 2475 / Hrk 5).